The primary structure comprises 185 residues: TRAF-interacting protein with FHA domain-containing protein A (185 aa).

Thr-9 carries the phosphothreonine modification. The 57-residue stretch at Val-48–Leu-104 folds into the FHA domain.

Belongs to the TIFA family. Homooligomer; homooligomerizes following phosphorylation at Thr-9. Interacts with IRAK1, TRAF2 and TRAF6. Interacts with TIFAB; binding to TIFAB inhibits TRAF6 activation, possibly by inducing a conformational change in TIFA. Interacts with ZCCHC11; binding to ZCCHC11 suppresses the TRAF6-dependent activation of NF-kappa-B. Phosphorylated at Thr-9 following detection of ADP-D-glycero-beta-D-manno-heptose (ADP-Heptose) by ALPK1. Phosphorylation at Thr-9 by ALPK1 leads to the formation of an intermolecular binding between the FHA domain and phosphorylated Thr-9, promoting TIFA oligomerization and TIFA-mediated NF-kappa-B activation.

Its subcellular location is the cytoplasm. Its function is as follows. Adapter molecule that plays a key role in the activation of pro-inflammatory NF-kappa-B signaling following detection of bacterial pathogen-associated molecular pattern metabolites (PAMPs). Promotes activation of an innate immune response by inducing the oligomerization and polyubiquitination of TRAF6, which leads to the activation of TAK1 and IKK through a proteasome-independent mechanism. TIFA-dependent innate immune response is triggered by ADP-D-glycero-beta-D-manno-heptose (ADP-Heptose), a potent PAMP present in all Gram-negative and some Gram-positive bacteria: ADP-Heptose is recognized by ALPK1, which phosphorylates TIFA at Thr-9, leading to TIFA homooligomerization and subsequent activation of pro-inflammatory NF-kappa-B signaling. In Rattus norvegicus (Rat), this protein is TRAF-interacting protein with FHA domain-containing protein A.